Reading from the N-terminus, the 237-residue chain is Uridylate kinase (237 aa).

An ATP-binding site is contributed by 9-12 (KLSG). G51 lines the UMP pocket. G52 and R56 together coordinate ATP. UMP-binding positions include D71 and 132–139 (CGNPFFTT). 3 residues coordinate ATP: T159, Y165, and D168.

Belongs to the UMP kinase family. In terms of assembly, homohexamer.

It is found in the cytoplasm. It carries out the reaction UMP + ATP = UDP + ADP. The protein operates within pyrimidine metabolism; CTP biosynthesis via de novo pathway; UDP from UMP (UMPK route): step 1/1. Inhibited by UTP. Its function is as follows. Catalyzes the reversible phosphorylation of UMP to UDP. In Prochlorococcus marinus (strain MIT 9303), this protein is Uridylate kinase.